The primary structure comprises 594 residues: UvrABC system protein C (594 aa).

Residues 14–91 enclose the GIY-YIG domain; sequence DQPGCYLMKD…IKKHDPKYNI (78 aa). Residues 196–231 enclose the UVR domain; the sequence is KEVRSELETKMYEASEKLEFERAKELRDQIAHIDAI.

The protein belongs to the UvrC family. In terms of assembly, interacts with UvrB in an incision complex.

The protein localises to the cytoplasm. Functionally, the UvrABC repair system catalyzes the recognition and processing of DNA lesions. UvrC both incises the 5' and 3' sides of the lesion. The N-terminal half is responsible for the 3' incision and the C-terminal half is responsible for the 5' incision. This chain is UvrABC system protein C, found in Bacillus cereus (strain Q1).